Here is a 236-residue protein sequence, read N- to C-terminus: MGHKVNPIGLRLGINRTWDSRWFAGRHEYGKLLHEDIKIREVLEKQLKQAGISKIVIERPHKKCRVAIHTARPGVVIGKKGADIEKLRREIGKITASEVHLNIVEVRKPEIDATLVAENIAQQLERRVAFRRAMKRAVQSAMRLGAGGIRINCAGRLGGAEIARTEWYREGRVPLHTLRADIDYGVATAKTAYGTCGVKVWIYKGEILEHDPMASERRALEGGDSGGGRSRRDDRG.

Residues 39–107 (IREVLEKQLK…EVHLNIVEVR (69 aa)) form the KH type-2 domain. The disordered stretch occupies residues 214 to 236 (ASERRALEGGDSGGGRSRRDDRG).

Belongs to the universal ribosomal protein uS3 family. As to quaternary structure, part of the 30S ribosomal subunit. Forms a tight complex with proteins S10 and S14.

Its function is as follows. Binds the lower part of the 30S subunit head. Binds mRNA in the 70S ribosome, positioning it for translation. The sequence is that of Small ribosomal subunit protein uS3 from Parvibaculum lavamentivorans (strain DS-1 / DSM 13023 / NCIMB 13966).